The sequence spans 378 residues: Sphingosine 1-phosphate receptor 3 (378 aa).

The Extracellular portion of the chain corresponds to 1–40 (MATALPPRLQPVRGNETLREHYQYVGKLAGRLKEASEGST). Asparagine 15 carries N-linked (GlcNAc...) asparagine glycosylation. Residues 41 to 65 (LTTVLFLVICSFIVLENLMVLIAIW) traverse the membrane as a helical segment. Residues 66–72 (KNNKFHN) are Cytoplasmic-facing. A helical transmembrane segment spans residues 73–101 (RMYFFIGNLALCDLLAGIAYKVNILMSGK). Over 102 to 115 (KTFSLSPTVWFLRE) the chain is Extracellular. A helical transmembrane segment spans residues 116 to 134 (GSMFVALGASTCSLLAIAI). Residues 135–153 (ERHLTMIKMRPYDANKRHR) are Cytoplasmic-facing. The chain crosses the membrane as a helical span at residues 154–179 (VFLLIGMCWLIAFTLGALPILGWNCL). Over 180-195 (HNLPDCSTILPLYSKK) the chain is Extracellular. Residues 196–216 (YIAFCISIFTAILVTIVILYA) traverse the membrane as a helical segment. At 217–243 (RIYFLVKSSSRKVANHNNSERSMALLR) the chain is on the cytoplasmic side. Residues 244-265 (TVVIVVSVFIACWSPLFILFLI) form a helical membrane-spanning segment. Over 266 to 281 (DVACRVQACPILFKAQ) the chain is Extracellular. The helical transmembrane segment at 282 to 302 (WFIVLAVLNSAMNPVIYTLAS) threads the bilayer. Residues 303–378 (KEMRRAFFRL…AALQNGIFCN (76 aa)) lie on the Cytoplasmic side of the membrane. At serine 326 the chain carries Phosphoserine. The tract at residues 327–357 (PIQPALDPSRSKSSSSNNSSHSPKVKEDLPH) is disordered. Over residues 337-348 (SKSSSSNNSSHS) the composition is skewed to low complexity.

The protein belongs to the G-protein coupled receptor 1 family. As to expression, expressed in all tissues, but most abundantly in heart, placenta, kidney, and liver.

It localises to the cell membrane. Its function is as follows. Receptor for the lysosphingolipid sphingosine 1-phosphate (S1P). S1P is a bioactive lysophospholipid that elicits diverse physiological effect on most types of cells and tissues. When expressed in rat HTC4 hepatoma cells, is capable of mediating S1P-induced cell proliferation and suppression of apoptosis. The protein is Sphingosine 1-phosphate receptor 3 of Homo sapiens (Human).